The sequence spans 516 residues: Extracellular endo-inulinase inuB (516 aa).

The first 25 residues, 1 to 25, serve as a signal peptide directing secretion; it reads MLNPKVAYMVWMTCLGLTLPSQAQS. Residues 40–43, Q59, W67, and 99–100 contribute to the substrate site; these read WMNE and FT. Residue E43 is part of the active site. An N-linked (GlcNAc...) asparagine glycan is attached at N109. Substrate-binding positions include 175–176 and E233; that span reads RD. N372, N419, and N424 each carry an N-linked (GlcNAc...) asparagine glycan.

Belongs to the glycosyl hydrolase 32 family.

It is found in the secreted. It catalyses the reaction Endohydrolysis of (2-&gt;1)-beta-D-fructosidic linkages in inulin.. Functionally, endo-inulinase involved in utilization of the plant storage polymer inulin, consisting of fructooligosaccharides with a degree of polymerization (DP) value from 2 to 60. This is Extracellular endo-inulinase inuB (inuB) from Aspergillus niger.